Consider the following 105-residue polypeptide: UPF0045 protein ECM15 (105 aa).

It belongs to the UPF0045 family.

This chain is UPF0045 protein ECM15 (ECM15), found in Eremothecium gossypii (strain ATCC 10895 / CBS 109.51 / FGSC 9923 / NRRL Y-1056) (Yeast).